Here is a 920-residue protein sequence, read N- to C-terminus: Bifunctional aspartokinase/homoserine dehydrogenase 1, chloroplastic (920 aa).

The interval Met-1–Pro-21 is disordered. A chloroplast-targeting transit peptide spans Met-1–Asp-92. The interval Met-93 to Leu-341 is aspartokinase. The tract at residues Ser-342 to Ile-566 is interface. ACT domains are found at residues Val-416–Asn-491 and Thr-497–Arg-574. Residues Ile-567 to Ser-920 are homoserine dehydrogenase. NAD(+) is bound by residues Ile-572 and Ala-601. Position 572 (Ile-572) interacts with NADP(+). Ile-572 lines the NADPH pocket. 3 residues coordinate NADP(+): Arg-604, Thr-653, and Lys-677. Thr-653 lines the NAD(+) pocket. NADPH contacts are provided by Thr-653 and Lys-677. Residues Glu-704, Val-707, Ala-709, and Leu-711 each coordinate Na(+). Gly-762 and Glu-765 together coordinate NADP(+). Residues Glu-765 and Asp-776 each coordinate L-homoserine. Lys-780 functions as the Proton donor in the catalytic mechanism. Gly-897 is an NAD(+) binding site. Gly-897 serves as a coordination point for NADP(+). Residue Gly-897 coordinates NADPH.

This sequence in the N-terminal section; belongs to the aspartokinase family. In the C-terminal section; belongs to the homoserine dehydrogenase family. Homo- or heterodimer. Requires a metal cation as cofactor.

The protein localises to the plastid. The protein resides in the chloroplast. The enzyme catalyses L-homoserine + NADP(+) = L-aspartate 4-semialdehyde + NADPH + H(+). It carries out the reaction L-homoserine + NAD(+) = L-aspartate 4-semialdehyde + NADH + H(+). It catalyses the reaction L-aspartate + ATP = 4-phospho-L-aspartate + ADP. It participates in amino-acid biosynthesis; L-lysine biosynthesis via DAP pathway; (S)-tetrahydrodipicolinate from L-aspartate: step 1/4. Its pathway is amino-acid biosynthesis; L-methionine biosynthesis via de novo pathway; L-homoserine from L-aspartate: step 1/3. The protein operates within amino-acid biosynthesis; L-methionine biosynthesis via de novo pathway; L-homoserine from L-aspartate: step 3/3. It functions in the pathway amino-acid biosynthesis; L-threonine biosynthesis; L-threonine from L-aspartate: step 1/5. It participates in amino-acid biosynthesis; L-threonine biosynthesis; L-threonine from L-aspartate: step 3/5. In terms of biological role, bifunctional aspartate kinase and homoserine dehydrogenase that catalyzes the first and the third steps toward the synthesis of lysine, methionine and threonine from aspartate. This chain is Bifunctional aspartokinase/homoserine dehydrogenase 1, chloroplastic (AKHSDH1), found in Zea mays (Maize).